Consider the following 28-residue polypeptide: Ranatuerin-2AVb (28 aa).

Cysteine 23 and cysteine 28 are oxidised to a cystine.

In terms of tissue distribution, expressed by the skin glands.

Its subcellular location is the secreted. Its function is as follows. Has antibacterial activity. This Rana arvalis (Moor frog) protein is Ranatuerin-2AVb.